The sequence spans 259 residues: MRVLVSNDDGVDAPGIQVLAEALRHAGHEVMVVAPDRDRSGASNSLTLDVPIRTRRIDAQTCAVAGTPTDCVHLALTGMLDYDPDIVVSGINNSANLGDDVIYSGTVSAAMEGRFLGLPAVAVSLVTHNHQAHNYDTAARAAVEIVARLKADPLPADTILNVNVPDLAWSDVLGFEVTRLGNRHRSEPCVPQRDPRGHTVYWIGPAGPEQDAGAGTDFHAVRTGHISITPIHVDLTRYQALDTVAGWVGGLTAALDGPA.

4 residues coordinate a divalent metal cation: Asp8, Asp9, Ser40, and Asn92.

The protein belongs to the SurE nucleotidase family. Requires a divalent metal cation as cofactor.

Its subcellular location is the cytoplasm. The enzyme catalyses a ribonucleoside 5'-phosphate + H2O = a ribonucleoside + phosphate. Its function is as follows. Nucleotidase that shows phosphatase activity on nucleoside 5'-monophosphates. In Xanthomonas axonopodis pv. citri (strain 306), this protein is 5'-nucleotidase SurE.